We begin with the raw amino-acid sequence, 241 residues long: Hybrid peroxiredoxin hyPrx5 (241 aa).

A Thioredoxin domain is found at 3-167 (SMEGKKVPQV…MLKYLAPQHQ (165 aa)). Catalysis depends on C49, which acts as the Cysteine sulfenic acid (-SOH) intermediate; for peroxiredoxin activity. Residues 170–241 (ESISIFTKPG…GSDDLEKYFA (72 aa)) enclose the Glutaredoxin domain. Residues C180 and C183 are joined by a disulfide bond.

This sequence in the N-terminal section; belongs to the peroxiredoxin family. Prx5 subfamily. The protein in the C-terminal section; belongs to the glutaredoxin family. Homotetramer; interconnecting Prx and Grx domains of different monomers.

The catalysed reaction is a hydroperoxide + 2 glutathione = an alcohol + glutathione disulfide + H2O. Its function is as follows. Thiol-specific peroxidase that catalyzes the reduction of hydrogen peroxide and organic hydroperoxides to water and alcohols, respectively. Plays a role in cell protection against oxidative stress by detoxifying peroxides. This is Hybrid peroxiredoxin hyPrx5 (PGdx) from Haemophilus influenzae (strain ATCC 51907 / DSM 11121 / KW20 / Rd).